The sequence spans 294 residues: 7,8-dihydropterin-6-methyl-4-(beta-D-ribofuranosyl)-aminobenzene-5'-phosphate synthase (294 aa).

Substrate-binding residues include E116, D186, K228, and H265.

The protein belongs to the metallo-beta-lactamase superfamily. Requires Mg(2+) as cofactor.

It catalyses the reaction 4-(beta-D-ribofuranosyl)aminobenzene 5'-phosphate + (7,8-dihydropterin-6-yl)methyl diphosphate = N-[(7,8-dihydropterin-6-yl)methyl]-4-(beta-D-ribofuranosyl)aniline 5'-phosphate + diphosphate. It functions in the pathway cofactor biosynthesis; 5,6,7,8-tetrahydromethanopterin biosynthesis. Its function is as follows. Catalyzes the condensation of 6-hydroxymethyl-7,8-dihydropterin pyrophosphate (DHPP) with 4-(beta-D-ribofuranosyl)-aminobenzene-5'-phosphate (beta-RFA-P) to form 7,8-dihydropterin-6-methyl-4-(beta-D-ribofuranosyl)-aminobenzene-5'-phosphate, a precursor in the biosynthesis of 5,6,7,8-tetrahydromethanopterin (H4MPT). To a lesser extent, is able to condense beta-RFA-P with another arylamine, 1-(4-aminophenyl)-1-deoxy-D-ribitol (APDR), to form 7,8-dihydropterin-6-methyl-1-(4-aminophenyl)-1-deoxy-D-ribitol. Dephosphorylated beta-RFA-P is not a substrate. The polypeptide is 7,8-dihydropterin-6-methyl-4-(beta-D-ribofuranosyl)-aminobenzene-5'-phosphate synthase (Methanocaldococcus jannaschii (strain ATCC 43067 / DSM 2661 / JAL-1 / JCM 10045 / NBRC 100440) (Methanococcus jannaschii)).